We begin with the raw amino-acid sequence, 89 residues long: Large ribosomal subunit protein uL24 (89 aa).

Belongs to the universal ribosomal protein uL24 family. As to quaternary structure, part of the 50S ribosomal subunit.

In terms of biological role, one of two assembly initiator proteins, it binds directly to the 5'-end of the 23S rRNA, where it nucleates assembly of the 50S subunit. Functionally, one of the proteins that surrounds the polypeptide exit tunnel on the outside of the subunit. This chain is Large ribosomal subunit protein uL24, found in Oenococcus oeni (strain ATCC BAA-331 / PSU-1).